A 296-amino-acid chain; its full sequence is Xyloglucan endotransglucosylase/hydrolase 1 (296 aa).

An N-terminal signal peptide occupies residues 1-23; sequence MGSSSSMWTVCVILASLASAALC. Residues 24–222 enclose the GH16 domain; that stretch reads ANPRRPVDVQ…WSKAPFIAAY (199 aa). The Nucleophile role is filled by E108. E112 (proton donor) is an active-site residue. E112 serves as a coordination point for xyloglucan. N116 carries an N-linked (GlcNAc...) asparagine glycan. Residues 125–127, 135–137, 201–202, and G206 contribute to the xyloglucan site; these read QTN, DRE, and DW. Disulfide bonds link C230–C239 and C276–C290. R281 provides a ligand contact to xyloglucan.

The protein belongs to the glycosyl hydrolase 16 family. XTH group 1 subfamily. Contains at least one intrachain disulfide bond essential for its enzymatic activity. Post-translationally, N-glycosylated; not essential for its enzymatic activity.

The protein localises to the secreted. It is found in the cell wall. It localises to the extracellular space. The protein resides in the apoplast. It carries out the reaction breaks a beta-(1-&gt;4) bond in the backbone of a xyloglucan and transfers the xyloglucanyl segment on to O-4 of the non-reducing terminal glucose residue of an acceptor, which can be a xyloglucan or an oligosaccharide of xyloglucan.. Catalyzes xyloglucan endohydrolysis (XEH) and/or endotransglycosylation (XET). Cleaves and religates xyloglucan polymers, an essential constituent of the primary cell wall, and thereby participates in cell wall construction of growing tissues. The polypeptide is Xyloglucan endotransglucosylase/hydrolase 1 (Glycine max (Soybean)).